The chain runs to 444 residues: Exodeoxyribonuclease 7 large subunit (444 aa).

It belongs to the XseA family. Heterooligomer composed of large and small subunits.

The protein resides in the cytoplasm. It catalyses the reaction Exonucleolytic cleavage in either 5'- to 3'- or 3'- to 5'-direction to yield nucleoside 5'-phosphates.. Bidirectionally degrades single-stranded DNA into large acid-insoluble oligonucleotides, which are then degraded further into small acid-soluble oligonucleotides. The protein is Exodeoxyribonuclease 7 large subunit of Xylella fastidiosa (strain M23).